The primary structure comprises 443 residues: MESLASLYKNHIATLQERTRDALTRFKLDALLIHSGELFNVFLDDHPYPFKVNPQFKAWVPVTQVPNCWLLVDGVNKPKLWFYLPVDYWHNVEPLPTSFWTEDVEVIALPKADGIGSLLPAARGNIGYIGPVPERALQLGIEASNINPKGVIDYLHYYRSFKTEYELACMREAQKMAVNGHRAAEEAFRSGMSEFDINIAYLTATGHRDTDVPYSNIVALNEHAAVLHYTKLDHQAPEEMRSFLLDAGAEYNGYAADLTRTWSAKSDNDYAQLVKDVNDEQLALIATMKAGVSYVDYHIQFHQRIAKLLRKHQIITDMSEEAMVENDLTGPFMPHGIGHPLGLQVHDVAGFMQDDSGTHLAAPAKYPYLRCTRILLPGMVLTIEPGIYFIESLLAPWREGQFSKHFNWQKIEALKPFGGIRIEDNVVIHENNVENMTRDLKLA.

Residues D246, D257, H339, E384, and E423 each contribute to the Mn(2+) site.

It belongs to the peptidase M24B family. Bacterial-type prolidase subfamily. It depends on Mn(2+) as a cofactor.

The catalysed reaction is Xaa-L-Pro dipeptide + H2O = an L-alpha-amino acid + L-proline. In terms of biological role, splits dipeptides with a prolyl residue in the C-terminal position. The protein is Xaa-Pro dipeptidase of Shigella dysenteriae serotype 1 (strain Sd197).